The sequence spans 337 residues: MANSC domain-containing protein 4 (337 aa).

An N-terminal signal peptide occupies residues 1-18; sequence MRAVELLLLLGLASMVHG. At 19-278 the chain is on the extracellular side; the sequence is LCSPTVFYRD…SSENEEPWDG (260 aa). In terms of domain architecture, MANSC spans 33 to 113; that stretch reads RFPGMLLDLE…LEPGASAILY (81 aa). 3 N-linked (GlcNAc...) asparagine glycosylation sites follow: Asn-114, Asn-227, and Asn-251. Composition is skewed to polar residues over residues 216–230 and 239–260; these read SPST…NKTI and TRVS…VNKT. Positions 216–277 are disordered; that stretch reads SPSTDFTHSP…HSSENEEPWD (62 aa). The chain crosses the membrane as a helical span at residues 279-299; it reads APASAGVWLACVTLGAAVISL. Over 300-337 the chain is Cytoplasmic; the sequence is CCRVVLGTSRCCGKRQGWSHMGQRSASGCRRNTLKENS. The tract at residues 314–337 is disordered; the sequence is RQGWSHMGQRSASGCRRNTLKENS.

The protein localises to the membrane. The polypeptide is MANSC domain-containing protein 4 (Mansc4) (Mus musculus (Mouse)).